The following is a 561-amino-acid chain: Putative transport protein Ent638_1362 (561 aa).

Helical transmembrane passes span 8–28 (LLNG…LCLG), 32–52 (LGSV…LLGQ), 66–86 (FMLF…SIFF), 94–114 (MLAL…GKLF), and 158–178 (HLSL…IVAA). RCK C-terminal domains lie at 202–288 (LDTD…SFRN) and 292–373 (VFDR…RIGF). A run of 5 helical transmembrane segments spans residues 383 to 403 (LLAF…TFQF), 406 to 426 (FSFG…LGFL), 447 to 467 (FGLM…IGHS), 475 to 495 (MLVA…LFGA), and 540 to 560 (AIAN…WPGL).

The protein belongs to the AAE transporter (TC 2.A.81) family. YbjL subfamily.

The protein localises to the cell membrane. The protein is Putative transport protein Ent638_1362 of Enterobacter sp. (strain 638).